The primary structure comprises 356 residues: Uroporphyrinogen decarboxylase (356 aa).

Residues 27-31 (RQAGR), Asp-77, Tyr-154, Thr-209, and His-327 each bind substrate.

Belongs to the uroporphyrinogen decarboxylase family. As to quaternary structure, homodimer.

It is found in the cytoplasm. The enzyme catalyses uroporphyrinogen III + 4 H(+) = coproporphyrinogen III + 4 CO2. Its pathway is porphyrin-containing compound metabolism; protoporphyrin-IX biosynthesis; coproporphyrinogen-III from 5-aminolevulinate: step 4/4. Catalyzes the decarboxylation of four acetate groups of uroporphyrinogen-III to yield coproporphyrinogen-III. This Cellvibrio japonicus (strain Ueda107) (Pseudomonas fluorescens subsp. cellulosa) protein is Uroporphyrinogen decarboxylase.